The primary structure comprises 473 residues: Double-stranded RNA-binding protein 7 (473 aa).

The segment covering Met1 to Pro10 has biased composition (pro residues). The disordered stretch occupies residues Met1–Ala22. DRBM domains lie at Val33–Lys102 and Leu118–Gly185. Composition is skewed to basic and acidic residues over residues Lys286 to His307, Asp317 to Arg327, and Val416 to Arg427. 2 disordered regions span residues Lys286–Ile329 and Gln393–Glu473. Over residues Glu433–Pro450 the composition is skewed to polar residues.

Functionally, binds double-stranded RNA. The polypeptide is Double-stranded RNA-binding protein 7 (DRB7) (Oryza sativa subsp. japonica (Rice)).